A 383-amino-acid polypeptide reads, in one-letter code: Sulfate adenylyltransferase (383 aa).

Belongs to the sulfate adenylyltransferase family.

It carries out the reaction sulfate + ATP + H(+) = adenosine 5'-phosphosulfate + diphosphate. The protein operates within sulfur metabolism; hydrogen sulfide biosynthesis; sulfite from sulfate: step 1/3. In Aeropyrum pernix (strain ATCC 700893 / DSM 11879 / JCM 9820 / NBRC 100138 / K1), this protein is Sulfate adenylyltransferase (sat).